The primary structure comprises 327 residues: tRNA uridine(34) hydroxylase (327 aa).

The Rhodanese domain maps to 130–224 (LDEDTVVLDT…YGKDPEVRGE (95 aa)). The active-site Cysteine persulfide intermediate is the C184.

It belongs to the TrhO family.

The enzyme catalyses uridine(34) in tRNA + AH2 + O2 = 5-hydroxyuridine(34) in tRNA + A + H2O. Catalyzes oxygen-dependent 5-hydroxyuridine (ho5U) modification at position 34 in tRNAs. This is tRNA uridine(34) hydroxylase from Streptococcus suis (strain 98HAH33).